The following is a 733-amino-acid chain: Catalase-peroxidase (733 aa).

An N-terminal signal peptide occupies residues 1-23 (MNNESKCPFAAAHGVRSPATARA). Residues 96-224 (WHSAGTYRTA…LAAVQMGLIY (129 aa)) constitute a cross-link (tryptophyl-tyrosyl-methioninium (Trp-Tyr) (with M-250)). The active-site Proton acceptor is the His-97. The segment at residues 224–250 (YVNPEGPDGNPDPVASGRDVRETFARM) is a cross-link (tryptophyl-tyrosyl-methioninium (Tyr-Met) (with W-96)). Position 265 (His-265) interacts with heme b.

This sequence belongs to the peroxidase family. Peroxidase/catalase subfamily. As to quaternary structure, homodimer or homotetramer. Requires heme b as cofactor. Formation of the three residue Trp-Tyr-Met cross-link is important for the catalase, but not the peroxidase activity of the enzyme.

It catalyses the reaction H2O2 + AH2 = A + 2 H2O. The enzyme catalyses 2 H2O2 = O2 + 2 H2O. Its function is as follows. Bifunctional enzyme with both catalase and broad-spectrum peroxidase activity. The protein is Catalase-peroxidase of Azoarcus sp. (strain BH72).